Consider the following 198-residue polypeptide: Na(+)-translocating NADH-quinone reductase subunit E (198 aa).

Transmembrane regions (helical) follow at residues 11-31, 35-55, 77-97, 110-130, 140-160, and 176-196; these read SVFI…FLAV, VSTS…AVPV, FLNF…LEMF, GIFL…SFMV, VVYG…LAGL, and LGIT…FSGI.

It belongs to the NqrDE/RnfAE family. In terms of assembly, composed of six subunits; NqrA, NqrB, NqrC, NqrD, NqrE and NqrF.

It localises to the cell inner membrane. The catalysed reaction is a ubiquinone + n Na(+)(in) + NADH + H(+) = a ubiquinol + n Na(+)(out) + NAD(+). NQR complex catalyzes the reduction of ubiquinone-1 to ubiquinol by two successive reactions, coupled with the transport of Na(+) ions from the cytoplasm to the periplasm. NqrA to NqrE are probably involved in the second step, the conversion of ubisemiquinone to ubiquinol. This is Na(+)-translocating NADH-quinone reductase subunit E from Actinobacillus succinogenes (strain ATCC 55618 / DSM 22257 / CCUG 43843 / 130Z).